The primary structure comprises 141 residues: Large ribosomal subunit protein uL16 (141 aa).

The interval 1–23 (MLMPKRTKWRKQQKGRNRGKSFR) is disordered.

Belongs to the universal ribosomal protein uL16 family. Part of the 50S ribosomal subunit.

Binds 23S rRNA and is also seen to make contacts with the A and possibly P site tRNAs. This Sulfurovum sp. (strain NBC37-1) protein is Large ribosomal subunit protein uL16.